The chain runs to 179 residues: Transcription termination/antitermination protein NusG (179 aa).

One can recognise a KOW domain in the interval 130 to 157 (EGDVVQIIDGAFMGQEGRVVEIENNKVK).

It belongs to the NusG family.

Participates in transcription elongation, termination and antitermination. This chain is Transcription termination/antitermination protein NusG, found in Streptococcus pyogenes serotype M1.